A 393-amino-acid polypeptide reads, in one-letter code: 1-deoxy-D-xylulose 5-phosphate reductoisomerase (393 aa).

Residues Thr13, Gly14, Ser15, Ile16, and Asn128 each contribute to the NADPH site. Residue Lys129 coordinates 1-deoxy-D-xylulose 5-phosphate. Glu130 contributes to the NADPH binding site. Asp154 contributes to the Mn(2+) binding site. Residues Ser155, Glu156, Ser178, and His201 each contribute to the 1-deoxy-D-xylulose 5-phosphate site. Glu156 is a Mn(2+) binding site. Gly207 serves as a coordination point for NADPH. 1-deoxy-D-xylulose 5-phosphate-binding residues include Ser214, Asn219, Lys220, and Glu223. Glu223 contacts Mn(2+).

Belongs to the DXR family. Requires Mg(2+) as cofactor. Mn(2+) serves as cofactor.

It catalyses the reaction 2-C-methyl-D-erythritol 4-phosphate + NADP(+) = 1-deoxy-D-xylulose 5-phosphate + NADPH + H(+). The protein operates within isoprenoid biosynthesis; isopentenyl diphosphate biosynthesis via DXP pathway; isopentenyl diphosphate from 1-deoxy-D-xylulose 5-phosphate: step 1/6. In terms of biological role, catalyzes the NADPH-dependent rearrangement and reduction of 1-deoxy-D-xylulose-5-phosphate (DXP) to 2-C-methyl-D-erythritol 4-phosphate (MEP). This chain is 1-deoxy-D-xylulose 5-phosphate reductoisomerase, found in Acidithiobacillus ferrooxidans (strain ATCC 23270 / DSM 14882 / CIP 104768 / NCIMB 8455) (Ferrobacillus ferrooxidans (strain ATCC 23270)).